The following is a 49-amino-acid chain: Large ribosomal subunit protein bL33C (49 aa).

This sequence belongs to the bacterial ribosomal protein bL33 family.

This chain is Large ribosomal subunit protein bL33C, found in Bacillus pumilus (strain SAFR-032).